The primary structure comprises 140 residues: MGRVRTKTVKKSSRQVIEKYYSRMTLDFHTNKKILEEVAIIPSKRLRNKIAGFSTHLMKRIQKGPVRGISLKLQEEERERRMDFVPDESAIKTDEIKVDKETLEMLASLGMSDTSGISAVEPQQAMAPIAAFGGRAPRRY.

Belongs to the eukaryotic ribosomal protein eS17 family.

In Arabidopsis thaliana (Mouse-ear cress), this protein is Small ribosomal subunit protein eS17y (RPS17B).